A 172-amino-acid chain; its full sequence is GTP-dependent dephospho-CoA kinase (172 aa).

Positions 40, 41, 42, 59, and 112 each coordinate GTP.

It belongs to the GTP-dependent DPCK family.

It catalyses the reaction 3'-dephospho-CoA + GTP = GDP + CoA + H(+). It participates in cofactor biosynthesis; coenzyme A biosynthesis. Catalyzes the GTP-dependent phosphorylation of the 3'-hydroxyl group of dephosphocoenzyme A to form coenzyme A (CoA). The protein is GTP-dependent dephospho-CoA kinase of Methanospirillum hungatei JF-1 (strain ATCC 27890 / DSM 864 / NBRC 100397 / JF-1).